Reading from the N-terminus, the 86-residue chain is Large ribosomal subunit protein bL27 (86 aa).

A compositionally biased stretch (gly residues) spans methionine 1–threonine 10. Residues methionine 1–arginine 20 are disordered.

The protein belongs to the bacterial ribosomal protein bL27 family.

This chain is Large ribosomal subunit protein bL27, found in Bordetella parapertussis (strain 12822 / ATCC BAA-587 / NCTC 13253).